We begin with the raw amino-acid sequence, 177 residues long: CASP-like protein 4D1 (177 aa).

Over Met-1–Arg-20 the chain is Cytoplasmic. A helical membrane pass occupies residues Met-21–Met-41. The Extracellular segment spans residues Thr-42 to Arg-66. Residues Tyr-67–Leu-87 traverse the membrane as a helical segment. Topologically, residues Asn-88–Asp-107 are cytoplasmic. A helical transmembrane segment spans residues Phe-108 to Ala-128. Residues Thr-129–Ser-153 lie on the Extracellular side of the membrane. The chain crosses the membrane as a helical span at residues Leu-154–Pro-174. The Cytoplasmic segment spans residues Lys-175–Val-177.

It belongs to the Casparian strip membrane proteins (CASP) family. As to quaternary structure, homodimer and heterodimers.

It localises to the cell membrane. This Populus trichocarpa (Western balsam poplar) protein is CASP-like protein 4D1.